A 318-amino-acid chain; its full sequence is Ferrochelatase (318 aa).

Fe cation contacts are provided by His186 and Glu264.

Belongs to the ferrochelatase family.

It localises to the cytoplasm. It carries out the reaction heme b + 2 H(+) = protoporphyrin IX + Fe(2+). Its pathway is porphyrin-containing compound metabolism; protoheme biosynthesis; protoheme from protoporphyrin-IX: step 1/1. Catalyzes the ferrous insertion into protoporphyrin IX. This is Ferrochelatase from Chlamydia caviae (strain ATCC VR-813 / DSM 19441 / 03DC25 / GPIC) (Chlamydophila caviae).